Here is a 235-residue protein sequence, read N- to C-terminus: Probable tetraspanin tspB (235 aa).

Topologically, residues 1–23 (MVDTTNLIPNTPRYLKVPLIAFN) are cytoplasmic. Residues 24–44 (TILWVLGLVLVIIGSIGVSFF) form a helical membrane-spanning segment. Residues 45-68 (SNFKDFTKVSKASAALSNLTTGAP) lie on the Extracellular side of the membrane. N62 carries N-linked (GlcNAc...) asparagine glycosylation. Residues 69–89 (AGVLVIGIFFVILTVIGCFVA) form a helical membrane-spanning segment. Over 90–93 (GKEK) the chain is Cytoplasmic. A helical membrane pass occupies residues 94–114 (LVGLVIYTMLMLIILVALIGV). Residues 115-200 (GGKALTLHND…ISSNLYLVGA (86 aa)) are Extracellular-facing. 2 N-linked (GlcNAc...) asparagine glycosylation sites follow: N143 and N159. Residues 201-221 (AAVSIGVIEFICMLFALFLII) form a helical membrane-spanning segment. Residues 222–235 (RICRAPRTKSYDYQ) are Cytoplasmic-facing.

Belongs to the tetraspanin (TM4SF) family.

It is found in the membrane. In Dictyostelium discoideum (Social amoeba), this protein is Probable tetraspanin tspB (tspB).